We begin with the raw amino-acid sequence, 398 residues long: Steroid C26-monooxygenase (398 aa).

Residue C340 coordinates heme.

It belongs to the cytochrome P450 family. Requires heme as cofactor.

It carries out the reaction cholest-4-en-3-one + 6 reduced [2Fe-2S]-[ferredoxin] + 3 O2 + 5 H(+) = (25R)-3-oxocholest-4-en-26-oate + 6 oxidized [2Fe-2S]-[ferredoxin] + 4 H2O. The enzyme catalyses cholest-4-en-3-one + 2 reduced [2Fe-2S]-[ferredoxin] + O2 + 2 H(+) = (25R)-3-oxocholest-4-en-26-ol + 2 oxidized [2Fe-2S]-[ferredoxin] + H2O. It catalyses the reaction (25R)-3-oxocholest-4-en-26-ol + 2 reduced [2Fe-2S]-[ferredoxin] + O2 + 2 H(+) = (25R)-3-oxocholest-4-en-26-al + 2 oxidized [2Fe-2S]-[ferredoxin] + 2 H2O. The catalysed reaction is (25R)-3-oxocholest-4-en-26-al + 2 reduced [2Fe-2S]-[ferredoxin] + O2 + H(+) = (25R)-3-oxocholest-4-en-26-oate + 2 oxidized [2Fe-2S]-[ferredoxin] + H2O. It carries out the reaction cholesterol + NADPH + O2 + H(+) = 26-hydroxycholesterol + NADP(+) + H2O. The enzyme catalyses 26-hydroxycholesterol + 2 reduced [2Fe-2S]-[ferredoxin] + O2 + 2 H(+) = (3beta)-hydroxy-cholest-5-en-26-al + 2 oxidized [2Fe-2S]-[ferredoxin] + 2 H2O. It catalyses the reaction (3beta)-hydroxy-cholest-5-en-26-al + NADPH + O2 = (3beta)-hydroxy-cholest-5-en-26-oate + NADP(+) + H2O. The catalysed reaction is (25S)-3-oxocholest-4-en-26-ol + 2 reduced [2Fe-2S]-[ferredoxin] + O2 + 2 H(+) = (25S)-3-oxocholest-4-en-26-al + 2 oxidized [2Fe-2S]-[ferredoxin] + 2 H2O. It carries out the reaction (25S)-3-oxocholest-4-en-26-al + 2 reduced [2Fe-2S]-[ferredoxin] + O2 + H(+) = (25S)-3-oxocholest-4-en-26-oate + 2 oxidized [2Fe-2S]-[ferredoxin] + H2O. Its pathway is steroid metabolism; cholesterol degradation. Inhibited by econazole, clotrimazole and miconazole. Involved in the utilization of cholesterol as the sole carbon and energy source by degrading the side chain during infection. Primarily catalyzes the sequential oxidation of the terminal methyl of cholest-4-en-3-one into (25R)-26-hydroxycholest-4-en-3-one (alcohol), (25R)-26-oxocholest-4-en-3-one (aldehyde), to finally yield the carboxylic acid (25R)-3-oxocholest-4-en-26-oate. In vitro, Cyp142 catalyzes with equal preference the oxidation of both (25R)- and (25S)-26-hydroxycholest-4-en-3-one diastereomers to the corresponding carboxylic acid which is a prerequisite for entry into the beta-oxidation pathway. Also able to sequentially oxidize cholesterol itself, not only cholest-4-en-3-one. This chain is Steroid C26-monooxygenase (cyp142), found in Mycobacterium tuberculosis (strain ATCC 25618 / H37Rv).